Reading from the N-terminus, the 889-residue chain is Alanine--tRNA ligase (889 aa).

His574, His578, Cys676, and His680 together coordinate Zn(2+).

It belongs to the class-II aminoacyl-tRNA synthetase family. The cofactor is Zn(2+).

It localises to the cytoplasm. It catalyses the reaction tRNA(Ala) + L-alanine + ATP = L-alanyl-tRNA(Ala) + AMP + diphosphate. In terms of biological role, catalyzes the attachment of alanine to tRNA(Ala) in a two-step reaction: alanine is first activated by ATP to form Ala-AMP and then transferred to the acceptor end of tRNA(Ala). Also edits incorrectly charged Ser-tRNA(Ala) and Gly-tRNA(Ala) via its editing domain. The protein is Alanine--tRNA ligase of Thermobifida fusca (strain YX).